The chain runs to 427 residues: MNPSPITIDLILEILSRLPAKSVRRFHCVSKRWASIFGSPYFKELFLTRSSTKPRLLFAIAEKGNKEKDCVWRFFSSPQLENPYEKSSSTLVATAEFHVRFSPDNLLICHYYDLKYFSIGYAFGLIYIYGNRGRARPLICNPTTGRYAILPNRYTYRKAFSFFGFDPIDKQYKALSMVYPSGPGHSRVITFGAGDLKWRRIKCSLRHDIKSEGVCINGVLYYLGDTSDWSRVNGNHVTSGYMIVCFDVRSEKFTFIDVKRFCRLINYKGKLAVIYWEDDVDIQELYYKKGIDVEEYVENNVNADATNELCVWILADVEKQEWSKHAYTWTDEKFFRRLVSIAGVTASGEIVFSMRKCNPKQPFYVFYFNPERNSLQRVEIQGFGEAVTKSCDVCTFVNHVEDLNVYDLKQLKSVHPPLVEPEYYDSD.

One can recognise an F-box domain in the interval 1 to 45 (MNPSPITIDLILEILSRLPAKSVRRFHCVSKRWASIFGSPYFKEL).

This chain is F-box protein At2g16450, found in Arabidopsis thaliana (Mouse-ear cress).